The primary structure comprises 101 residues: Small ribosomal subunit protein uS14 (101 aa).

The protein belongs to the universal ribosomal protein uS14 family. Part of the 30S ribosomal subunit. Contacts proteins S3 and S10.

Binds 16S rRNA, required for the assembly of 30S particles and may also be responsible for determining the conformation of the 16S rRNA at the A site. The polypeptide is Small ribosomal subunit protein uS14 (Citrobacter koseri (strain ATCC BAA-895 / CDC 4225-83 / SGSC4696)).